We begin with the raw amino-acid sequence, 547 residues long: Chaperonin GroEL (547 aa).

Residues T30–P33, K51, D87–T91, G415, N479–A481, and D495 each bind ATP. The disordered stretch occupies residues K526–F547. Residues A535–F547 show a composition bias toward gly residues.

It belongs to the chaperonin (HSP60) family. As to quaternary structure, forms a cylinder of 14 subunits composed of two heptameric rings stacked back-to-back. Interacts with the co-chaperonin GroES.

The protein localises to the cytoplasm. It carries out the reaction ATP + H2O + a folded polypeptide = ADP + phosphate + an unfolded polypeptide.. Functionally, together with its co-chaperonin GroES, plays an essential role in assisting protein folding. The GroEL-GroES system forms a nano-cage that allows encapsulation of the non-native substrate proteins and provides a physical environment optimized to promote and accelerate protein folding. The polypeptide is Chaperonin GroEL (Xylella fastidiosa (strain M12)).